Consider the following 54-residue polypeptide: Large ribosomal subunit protein bL33B (54 aa).

Belongs to the bacterial ribosomal protein bL33 family.

The sequence is that of Large ribosomal subunit protein bL33B from Myxococcus xanthus (strain DK1622).